Reading from the N-terminus, the 422-residue chain is N-acylglucosamine 2-epimerase (422 aa).

The interval 185-206 (LLNLVEQLGEADEELAGISAEL) is leucine-zipper.

The protein belongs to the N-acylglucosamine 2-epimerase family. In terms of assembly, homodimer. Forms a heterodimer with renin and inhibits its activity.

The catalysed reaction is an N-acyl-D-glucosamine = an N-acyl-D-mannosamine. Its pathway is amino-sugar metabolism; N-acetylneuraminate degradation. Catalyzes the interconversion of N-acetylglucosamine to N-acetylmannosamine. Involved in the N-glycolylneuraminic acid (Neu5Gc) degradation pathway. In Bos taurus (Bovine), this protein is N-acylglucosamine 2-epimerase (RENBP).